A 206-amino-acid chain; its full sequence is MSRRQGRETALQTLFMADVGRMEPAYALQYASEEFGISEAAAAFARELVEGAVANRETIDGNIRRLAKEWNLERMPHVDRNLLRVAIFEMLFREDIPLNAAINEAIELAKIYANEESAKFVNGILGQLARELREARGEKTSAQEGAPAAVTNRVTTPAPESTPVPDPDATPATTPVTTTVISETAANRETRSMAEEETQPPGVNEV.

The tract at residues 135 to 206 (ARGEKTSAQE…ETQPPGVNEV (72 aa)) is disordered. Low complexity predominate over residues 169-180 (ATPATTPVTTTV).

It belongs to the NusB family.

In terms of biological role, involved in transcription antitermination. Required for transcription of ribosomal RNA (rRNA) genes. Binds specifically to the boxA antiterminator sequence of the ribosomal RNA (rrn) operons. This is Transcription antitermination protein NusB from Heliobacterium modesticaldum (strain ATCC 51547 / Ice1).